The following is a 100-amino-acid chain: Urease subunit gamma (100 aa).

The protein belongs to the urease gamma subunit family. Heterotrimer of UreA (gamma), UreB (beta) and UreC (alpha) subunits. Three heterotrimers associate to form the active enzyme.

Its subcellular location is the cytoplasm. The enzyme catalyses urea + 2 H2O + H(+) = hydrogencarbonate + 2 NH4(+). The protein operates within nitrogen metabolism; urea degradation; CO(2) and NH(3) from urea (urease route): step 1/1. This is Urease subunit gamma from Rhodopseudomonas palustris (strain BisA53).